A 178-amino-acid chain; its full sequence is UPF0098 protein PYRAB11530 (178 aa).

A signal peptide spans 1–22 (MRYLVPLLVFMVLGMGCLGGGG).

The protein belongs to the UPF0098 family.

The protein is UPF0098 protein PYRAB11530 of Pyrococcus abyssi (strain GE5 / Orsay).